We begin with the raw amino-acid sequence, 449 residues long: Tubulin alpha-8 chain (449 aa).

The MREC motif motif lies at 1 to 4 (MREC). Residues Q11, E71, S140, G144, T145, T179, N206, and N228 each coordinate GTP. Mg(2+) is bound at residue E71. The active site involves E254.

It belongs to the tubulin family. In terms of assembly, dimer of alpha and beta chains. A typical microtubule is a hollow water-filled tube with an outer diameter of 25 nm and an inner diameter of 15 nM. Alpha-beta heterodimers associate head-to-tail to form protofilaments running lengthwise along the microtubule wall with the beta-tubulin subunit facing the microtubule plus end conferring a structural polarity. Microtubules usually have 13 protofilaments but different protofilament numbers can be found in some organisms and specialized cells. The cofactor is Mg(2+). Some glutamate residues at the C-terminus are polyglycylated, resulting in polyglycine chains on the gamma-carboxyl group. Glycylation is mainly limited to tubulin incorporated into axonemes (cilia and flagella) whereas glutamylation is prevalent in neuronal cells, centrioles, axonemes, and the mitotic spindle. Both modifications can coexist on the same protein on adjacent residues, and lowering polyglycylation levels increases polyglutamylation, and reciprocally. Cilia and flagella glycylation is required for their stability and maintenance. Flagella glycylation controls sperm motility. In terms of processing, some glutamate residues at the C-terminus are polyglutamylated, resulting in polyglutamate chains on the gamma-carboxyl group. Polyglutamylation plays a key role in microtubule severing by spastin (SPAST). SPAST preferentially recognizes and acts on microtubules decorated with short polyglutamate tails: severing activity by SPAST increases as the number of glutamates per tubulin rises from one to eight, but decreases beyond this glutamylation threshold. Glutamylation is also involved in cilia motility. Post-translationally, the C-terminal phenylalanine residue is cleaved by MATCAP1/KIAA0895L. Expressed at highest levels in the testis, followed by skeletal and heart muscle. Expressed at low levels in the developing brain.

The protein resides in the cytoplasm. It localises to the cytoskeleton. The enzyme catalyses GTP + H2O = GDP + phosphate + H(+). Functionally, tubulin is the major constituent of microtubules, a cylinder consisting of laterally associated linear protofilaments composed of alpha- and beta-tubulin heterodimers. Microtubules grow by the addition of GTP-tubulin dimers to the microtubule end, where a stabilizing cap forms. Below the cap, tubulin dimers are in GDP-bound state, owing to GTPase activity of alpha-tubulin. This chain is Tubulin alpha-8 chain (Tuba8), found in Mus musculus (Mouse).